The sequence spans 41 residues: Large ribosomal subunit protein bL32c (41 aa).

This sequence belongs to the bacterial ribosomal protein bL32 family.

Its subcellular location is the plastid. The chain is Large ribosomal subunit protein bL32c (rpl32) from Helicosporidium sp. subsp. Simulium jonesii (Green alga).